A 760-amino-acid polypeptide reads, in one-letter code: Elongation factor G, mitochondrial (760 aa).

The transit peptide at 1–37 (MIRGMLPRGLRALRPSVSPTVVSSSLHRNFHSSIRRF) directs the protein to the mitochondrion. The region spanning 68–349 (SRLRNIGVSA…AVVDYLPQPN (282 aa)) is the tr-type G domain. GTP-binding positions include 77–84 (AHIDSGKT), 148–152 (DTPGH), and 202–205 (NKMD).

Belongs to the TRAFAC class translation factor GTPase superfamily. Classic translation factor GTPase family. EF-G/EF-2 subfamily.

It localises to the mitochondrion. Its pathway is protein biosynthesis; polypeptide chain elongation. In terms of biological role, mitochondrial GTPase that catalyzes the GTP-dependent ribosomal translocation step during translation elongation. During this step, the ribosome changes from the pre-translocational (PRE) to the post-translocational (POST) state as the newly formed A-site-bound peptidyl-tRNA and P-site-bound deacylated tRNA move to the P and E sites, respectively. Catalyzes the coordinated movement of the two tRNA molecules, the mRNA and conformational changes in the ribosome. The sequence is that of Elongation factor G, mitochondrial from Meyerozyma guilliermondii (strain ATCC 6260 / CBS 566 / DSM 6381 / JCM 1539 / NBRC 10279 / NRRL Y-324) (Yeast).